The sequence spans 371 residues: 4-hydroxy-3-methylbut-2-en-1-yl diphosphate synthase (flavodoxin) (371 aa).

[4Fe-4S] cluster is bound by residues C270, C273, C305, and E312.

Belongs to the IspG family. It depends on [4Fe-4S] cluster as a cofactor.

It catalyses the reaction (2E)-4-hydroxy-3-methylbut-2-enyl diphosphate + oxidized [flavodoxin] + H2O + 2 H(+) = 2-C-methyl-D-erythritol 2,4-cyclic diphosphate + reduced [flavodoxin]. Its pathway is isoprenoid biosynthesis; isopentenyl diphosphate biosynthesis via DXP pathway; isopentenyl diphosphate from 1-deoxy-D-xylulose 5-phosphate: step 5/6. Converts 2C-methyl-D-erythritol 2,4-cyclodiphosphate (ME-2,4cPP) into 1-hydroxy-2-methyl-2-(E)-butenyl 4-diphosphate. The polypeptide is 4-hydroxy-3-methylbut-2-en-1-yl diphosphate synthase (flavodoxin) (Shewanella pealeana (strain ATCC 700345 / ANG-SQ1)).